Reading from the N-terminus, the 82-residue chain is uncharacterized protein (82 aa).

This is an uncharacterized protein from Dictyostelium discoideum (Social amoeba).